Here is a 248-residue protein sequence, read N- to C-terminus: Phycocyanobilin:ferredoxin oxidoreductase (248 aa).

This sequence belongs to the HY2 family.

The catalysed reaction is (2R,3Z)-phycocyanobilin + 4 oxidized [2Fe-2S]-[ferredoxin] = biliverdin IXalpha + 4 reduced [2Fe-2S]-[ferredoxin] + 4 H(+). Catalyzes the four-electron reduction of biliverdin IX-alpha (2-electron reduction at both the A and D rings); the reaction proceeds via an isolatable 2-electron intermediate, 181,182-dihydrobiliverdin. This Synechocystis sp. (strain ATCC 27184 / PCC 6803 / Kazusa) protein is Phycocyanobilin:ferredoxin oxidoreductase (pcyA).